A 235-amino-acid polypeptide reads, in one-letter code: MAVSVLDPGRRAWCAEALGYEFRDESLLLEALTHTTYANEHPRARANERLEFLGDSVLGMVIAAHLYERYPDLPEGELTKIRAAVVCEPSLAERARVLGIGRHMRFGRGEAVSGRDRDSTLSDAFEAVVGALYLDGGLEAAQRFVLRELGQLVEAARQGLVRVDYKTQLQEQLQRQGAAAPQYRLLVEEGPAHLRRFQVGVYFEGRLLGTGWGRNKKEAEQEAARQALMPEHHSG.

In terms of domain architecture, RNase III spans 11 to 137 (RAWCAEALGY…VVGALYLDGG (127 aa)). Glutamate 51 is a Mg(2+) binding site. The active site involves aspartate 55. Residues aspartate 123 and glutamate 126 each coordinate Mg(2+). Glutamate 126 is an active-site residue. The DRBM domain occupies 164 to 233 (DYKTQLQEQL…ARQALMPEHH (70 aa)).

The protein belongs to the ribonuclease III family. As to quaternary structure, homodimer. Requires Mg(2+) as cofactor.

Its subcellular location is the cytoplasm. The enzyme catalyses Endonucleolytic cleavage to 5'-phosphomonoester.. Functionally, digests double-stranded RNA. Involved in the processing of primary rRNA transcript to yield the immediate precursors to the large and small rRNAs (23S and 16S). Processes some mRNAs, and tRNAs when they are encoded in the rRNA operon. Processes pre-crRNA and tracrRNA of type II CRISPR loci if present in the organism. The sequence is that of Ribonuclease 3 from Symbiobacterium thermophilum (strain DSM 24528 / JCM 14929 / IAM 14863 / T).